The chain runs to 400 residues: NADH-quinone oxidoreductase subunit D (400 aa).

The protein belongs to the complex I 49 kDa subunit family. As to quaternary structure, NDH-1 is composed of 14 different subunits. Subunits NuoB, C, D, E, F, and G constitute the peripheral sector of the complex.

It localises to the cell inner membrane. It catalyses the reaction a quinone + NADH + 5 H(+)(in) = a quinol + NAD(+) + 4 H(+)(out). NDH-1 shuttles electrons from NADH, via FMN and iron-sulfur (Fe-S) centers, to quinones in the respiratory chain. The immediate electron acceptor for the enzyme in this species is believed to be menaquinone. Couples the redox reaction to proton translocation (for every two electrons transferred, four hydrogen ions are translocated across the cytoplasmic membrane), and thus conserves the redox energy in a proton gradient. This chain is NADH-quinone oxidoreductase subunit D, found in Prosthecochloris aestuarii (strain DSM 271 / SK 413).